Consider the following 340-residue polypeptide: Mitotic checkpoint protein BUB3.1 (340 aa).

The segment at 1 to 20 is disordered; it reads MTTVTPSAGRELSNPPSDGI. 5 WD repeats span residues 15–54, 96–135, 142–179, 239–278, and 281–324; these read PPSD…LKGE, THDK…GPER, LQPE…QPEQ, DIVY…RLYQ, and KYPT…RSVN.

Belongs to the WD repeat BUB3 family. As to quaternary structure, part of the mitotic checkpoint complex (MCC); interacts with CDC20-1 and CDC20-2. Interacts with MAD2 and BUBR1. Expressed in actively dividing tissues, early in organ development, in young leaves, lateral root primordia and root meristems, flower buds, flowers and siliques.

It localises to the nucleus. It is found in the chromosome. The protein localises to the centromere. The protein resides in the kinetochore. Its subcellular location is the cytoplasm. It localises to the cytoskeleton. It is found in the phragmoplast. The protein localises to the spindle. Its function is as follows. Has a dual function in spindle-assembly checkpoint signaling and in promoting the establishment of correct kinetochore-microtubule (K-MT) attachments. Promotes the formation of stable end-on bipolar attachments. Necessary for kinetochore localization of BUB1. The BUB1/BUB3 complex plays a role in the inhibition of anaphase-promoting complex or cyclosome (APC/C) when spindle-assembly checkpoint is activated and inhibits the ubiquitin ligase activity of APC/C by phosphorylating its activator CDC20. Essential for gametophyte development. In Arabidopsis thaliana (Mouse-ear cress), this protein is Mitotic checkpoint protein BUB3.1 (BUB3.1).